The following is a 403-amino-acid chain: Indoleamine 2,3-dioxygenase 1 (403 aa).

His-346 contacts heme b. Residues 360-381 (QQPKENKTSEDPSKLEAKGTGG) form a disordered region. Residues 363 to 376 (KENKTSEDPSKLEA) are compositionally biased toward basic and acidic residues.

The protein belongs to the indoleamine 2,3-dioxygenase family. As to quaternary structure, monomer. It depends on heme b as a cofactor. As to expression, expressed in mature dendritic cells located in lymphoid organs (including lymph nodes, spleen, tonsils, Peyers's patches, the gut lamina propria, and the thymic medulla), in some epithelial cells of the female genital tract, as well as in endothelial cells of term placenta and in lung parenchyma. Weakly or not expressed in most normal tissues, but mostly inducible in most tissues. Expressed in more than 50% of tumors, either by tumoral, stromal, or endothelial cells (expression in tumor is associated with a worse clinical outcome). Not overexpressed in tumor-draining lymph nodes.

The protein localises to the cytoplasm. Its subcellular location is the cytosol. The catalysed reaction is D-tryptophan + O2 = N-formyl-D-kynurenine. It catalyses the reaction L-tryptophan + O2 = N-formyl-L-kynurenine. Its pathway is amino-acid degradation; L-tryptophan degradation via kynurenine pathway; L-kynurenine from L-tryptophan: step 1/2. With respect to regulation, activity is inhibited by and MTH-trp (methylthiohydantoin-DL-tryptophan), modestly inhibited by L-1MT (1-methyl-L-tryptophan) but not D-1MT (1-methyl-D-tryptophan). In terms of biological role, catalyzes the first and rate limiting step of the catabolism of the essential amino acid tryptophan along the kynurenine pathway. Involved in the peripheral immune tolerance, contributing to maintain homeostasis by preventing autoimmunity or immunopathology that would result from uncontrolled and overreacting immune responses. Tryptophan shortage inhibits T lymphocytes division and accumulation of tryptophan catabolites induces T-cell apoptosis and differentiation of regulatory T-cells. Acts as a suppressor of anti-tumor immunity. Limits the growth of intracellular pathogens by depriving tryptophan. Protects the fetus from maternal immune rejection. The chain is Indoleamine 2,3-dioxygenase 1 from Homo sapiens (Human).